Consider the following 363-residue polypeptide: Thioredoxin domain-containing protein C13F5.05, mitochondrial (363 aa).

A mitochondrion-targeting transit peptide spans 1-24 (MLFRIPTLFTLFLACFSLVSGVFG). The region spanning 32-141 (NTIELNSKNF…KSLQKFVSDS (110 aa)) is the Thioredoxin domain.

It localises to the mitochondrion. The polypeptide is Thioredoxin domain-containing protein C13F5.05, mitochondrial (Schizosaccharomyces pombe (strain 972 / ATCC 24843) (Fission yeast)).